A 458-amino-acid chain; its full sequence is NADH-quinone oxidoreductase subunit N (458 aa).

A run of 13 helical transmembrane segments spans residues 3-23 (QYLFLLPEITLFILSCLLLFL), 29-49 (FGLIAVLITLAATFFSQTCTS), 64-84 (QNVKLVILAFTCVFFIQAIAV), 92-112 (FSVLVLLSLLGMLLSVSSSTL), 147-167 (TLLGTFMSAVMIYGISLIFVV), 188-208 (ILLFISGLMFKVAAAPFHAWI), 222-242 (FFAVLPKLSLIVVLVSLISNL), 265-285 (NILFTSGILSIAFGTFSAFGQ), 291-311 (FIGFASIAHVGYMLLGVSNSA), 320-340 (IAYALVYSFTNLGILSVVLML), 358-378 (VALAFVLLLFSSAGVPPFIGF), 394-414 (IPTAIFSMLAGVISAFYYARI), and 437-457 (LLTSIVVLCALFSTFGFVLLI).

It belongs to the complex I subunit 2 family. As to quaternary structure, NDH-1 is composed of 14 different subunits. Subunits NuoA, H, J, K, L, M, N constitute the membrane sector of the complex.

It is found in the cell inner membrane. It carries out the reaction a quinone + NADH + 5 H(+)(in) = a quinol + NAD(+) + 4 H(+)(out). Functionally, NDH-1 shuttles electrons from NADH, via FMN and iron-sulfur (Fe-S) centers, to quinones in the respiratory chain. The immediate electron acceptor for the enzyme in this species is believed to be ubiquinone. Couples the redox reaction to proton translocation (for every two electrons transferred, four hydrogen ions are translocated across the cytoplasmic membrane), and thus conserves the redox energy in a proton gradient. This Neorickettsia risticii (strain Illinois) protein is NADH-quinone oxidoreductase subunit N.